A 257-amino-acid polypeptide reads, in one-letter code: Imidazole glycerol phosphate synthase subunit HisF (257 aa).

Catalysis depends on residues Asp-11 and Asp-130.

Belongs to the HisA/HisF family. In terms of assembly, heterodimer of HisH and HisF.

It localises to the cytoplasm. The enzyme catalyses 5-[(5-phospho-1-deoxy-D-ribulos-1-ylimino)methylamino]-1-(5-phospho-beta-D-ribosyl)imidazole-4-carboxamide + L-glutamine = D-erythro-1-(imidazol-4-yl)glycerol 3-phosphate + 5-amino-1-(5-phospho-beta-D-ribosyl)imidazole-4-carboxamide + L-glutamate + H(+). It participates in amino-acid biosynthesis; L-histidine biosynthesis; L-histidine from 5-phospho-alpha-D-ribose 1-diphosphate: step 5/9. Its function is as follows. IGPS catalyzes the conversion of PRFAR and glutamine to IGP, AICAR and glutamate. The HisF subunit catalyzes the cyclization activity that produces IGP and AICAR from PRFAR using the ammonia provided by the HisH subunit. The chain is Imidazole glycerol phosphate synthase subunit HisF from Aeromonas hydrophila subsp. hydrophila (strain ATCC 7966 / DSM 30187 / BCRC 13018 / CCUG 14551 / JCM 1027 / KCTC 2358 / NCIMB 9240 / NCTC 8049).